A 278-amino-acid chain; its full sequence is Probable 3-hydroxybutyryl-CoA dehydrogenase (278 aa).

This sequence belongs to the 3-hydroxyacyl-CoA dehydrogenase family.

It catalyses the reaction (3S)-3-hydroxybutanoyl-CoA + NADP(+) = acetoacetyl-CoA + NADPH + H(+). It functions in the pathway lipid metabolism; butanoate metabolism. The polypeptide is Probable 3-hydroxybutyryl-CoA dehydrogenase (hbd) (Deinococcus radiodurans (strain ATCC 13939 / DSM 20539 / JCM 16871 / CCUG 27074 / LMG 4051 / NBRC 15346 / NCIMB 9279 / VKM B-1422 / R1)).